Reading from the N-terminus, the 577-residue chain is Arginine--tRNA ligase (577 aa).

A 'HIGH' region motif is present at residues 122 to 132 (PNVAKEMHVGH).

The protein belongs to the class-I aminoacyl-tRNA synthetase family. As to quaternary structure, monomer.

The protein localises to the cytoplasm. The catalysed reaction is tRNA(Arg) + L-arginine + ATP = L-arginyl-tRNA(Arg) + AMP + diphosphate. This chain is Arginine--tRNA ligase, found in Salmonella newport (strain SL254).